Consider the following 334-residue polypeptide: MPNVTLIGIDLGKNSFHIHCQEKHGNTLLRKRFSRIQLTQFLATCPPCIVAMESCAGAHFMARHISQLGHQVKLISPQFVRPFVKSNKNDFIDAEAICEATSRPSMHFVTPRTEDQQAMSALHRVRDALVRERVKATNQMHAFLLEFGISMPRGIAVIKRLATVPEEHELPPYLVRLLTRLHQHYGYLCEQIEEIERELKNHLADDETAQRLLTIPGIGTITASLLATKLGDGKNYLSSRDFGASTGLVPRQYSTGGKSTLMGISKRGDKNLRRLLVQCARVYMQRLEYQSGRLAEWVNGQLTRHHSNVVACALANKLARIAWVVTTQGTVFSK.

Belongs to the transposase IS1111A/IS1328/IS1533 family.

Required for the transposition of the insertion element. The sequence is that of Transposase for insertion sequence element IS1328 from Yersinia enterocolitica.